Consider the following 395-residue polypeptide: PCI domain-containing protein 2 homolog (395 aa).

The PCI domain maps to 208 to 389 (ITYKYFVGRR…NKLVVSKQNP (182 aa)).

The protein belongs to the CSN12 family. In terms of assembly, component of the nuclear pore complex (NPC)-associated TREX-2/AMEX complex (anchoring and mRNA export complex), composed of e(y)2, xmas and PCID2. Interaction between the TREX-2/AMEX complex and the ORC complex is required for ORC localization to mRNPs, and consequently mRNA export. Within the TREX-2/AMEX-ORC complex, interacts with Orc3 and Orc4. Interacts with sbr/NXF1. Interacts with Moe. Interacts with nudC; required to maintain stability in the cytoplasm. In terms of processing, mono- and poly-ubiquitinated.

It is found in the nucleus. Its subcellular location is the cytoplasm. The protein resides in the nucleus membrane. The protein localises to the cytoskeleton. Required for the export of nuclear mRNAs and involved in mRNA trafficking in the cytoplasm. Component of the nuclear pore complex (NPC)-associated TREX-2/AMEX complex (anchoring and mRNA export complex) which functions in docking export-competent ribonucleoprotein particles (mRNPs) to the nuclear entrance of the nuclear pore complex (nuclear basket), thereby enabling the export of mRNAs to the cytoplasm through the nuclear pores. Within the complex, specifically promotes the association of factors involved in regulating nuclear mRNA export, such as Moe, sbr/NXF1 and the ORC complex, to the mRNPs particles. In the cytoplasm, functions independently of its role in the TREX-2/AMEX complex, to promote cytoplasmic mRNA trafficking together with nudC. Associates with translationally active polysomes. This Drosophila melanogaster (Fruit fly) protein is PCI domain-containing protein 2 homolog.